A 523-amino-acid chain; its full sequence is Sensory neuron membrane protein 1 (523 aa).

The Cytoplasmic segment spans residues Met1–Ala11. A helical membrane pass occupies residues Ile12–Leu32. At Lys33–Val458 the chain is on the extracellular side. Asn67 and Asn229 each carry an N-linked (GlcNAc...) asparagine glycan. Cystine bridges form between Cys268/Cys333, Cys297/Cys352, and Cys335/Cys341. Asn440 carries N-linked (GlcNAc...) asparagine glycosylation. A helical transmembrane segment spans residues Gly459–Phe479. The Cytoplasmic segment spans residues His480–Ile523.

It belongs to the CD36 family. Detected in sensory neurons in the antenna.

It localises to the cell membrane. In terms of biological role, plays an olfactory role that is not restricted to pheromone sensitivity. This chain is Sensory neuron membrane protein 1, found in Heliothis virescens (Tobacco budworm moth).